The following is a 276-amino-acid chain: uncharacterized protein (276 aa).

The tract at residues Met-1–Thr-20 is disordered.

This is an uncharacterized protein from Dictyostelium discoideum (Social amoeba).